A 506-amino-acid polypeptide reads, in one-letter code: FAD-linked oxidoreductase aurO (506 aa).

The region spanning I92–M260 is the FAD-binding PCMH-type domain.

The protein belongs to the oxygen-dependent FAD-linked oxidoreductase family. In terms of assembly, might be part of an extracellular enzyme complex composed of GIP1, aurF, aurO and aurS. FAD serves as cofactor.

The protein resides in the secreted. It localises to the extracellular space. The protein operates within pigment biosynthesis. Its function is as follows. FAD-linked oxidoreductase; part of the gene cluster that mediates the biosynthesis of aurofusarin, a red mycelium pigment which is acting as a mycotoxin. The first step is performed by the polyketide synthase which condenses one acetyl-CoA and 6 malonyl-CoA units to form the first intermediate, the cyclic heptaketide and yellow pigment YWA1. The C2 hydroxyl group in the pyrone ring of YWA1 is probably formed during ring closure by an aldol-type cyclization reaction. The dehydratase aurZ then acts as the first tailoring enzyme in the aurofusarin biosynthetic pathway by converting YWA1 to nor-rubrofusarin. Nor-rubrofusarin is then methylated to rubrofusarin by the O-methyltransferase aurJ. Rubrofusarin is then transported across the plasma membrane by the rubrofusarin-specific pump aurT for further enzymatic processing by the extracellular complex composed of GIP1, aurF, aurO and aurS to yield aurofusarin. This chain is FAD-linked oxidoreductase aurO, found in Gibberella zeae (strain ATCC MYA-4620 / CBS 123657 / FGSC 9075 / NRRL 31084 / PH-1) (Wheat head blight fungus).